The primary structure comprises 92 residues: Small ribosomal subunit protein uS19 (92 aa).

This sequence belongs to the universal ribosomal protein uS19 family.

Its function is as follows. Protein S19 forms a complex with S13 that binds strongly to the 16S ribosomal RNA. This chain is Small ribosomal subunit protein uS19, found in Pelobacter propionicus (strain DSM 2379 / NBRC 103807 / OttBd1).